Here is a 156-residue protein sequence, read N- to C-terminus: 6,7-dimethyl-8-ribityllumazine synthase (156 aa).

Residues Phe-23, 57–59, and 81–83 each bind 5-amino-6-(D-ribitylamino)uracil; these read AFE and AVI. 86–87 contacts (2S)-2-hydroxy-3-oxobutyl phosphate; it reads AT. His-89 (proton donor) is an active-site residue. Phe-114 serves as a coordination point for 5-amino-6-(D-ribitylamino)uracil. Arg-128 contributes to the (2S)-2-hydroxy-3-oxobutyl phosphate binding site.

Belongs to the DMRL synthase family.

It catalyses the reaction (2S)-2-hydroxy-3-oxobutyl phosphate + 5-amino-6-(D-ribitylamino)uracil = 6,7-dimethyl-8-(1-D-ribityl)lumazine + phosphate + 2 H2O + H(+). It participates in cofactor biosynthesis; riboflavin biosynthesis; riboflavin from 2-hydroxy-3-oxobutyl phosphate and 5-amino-6-(D-ribitylamino)uracil: step 1/2. Its function is as follows. Catalyzes the formation of 6,7-dimethyl-8-ribityllumazine by condensation of 5-amino-6-(D-ribitylamino)uracil with 3,4-dihydroxy-2-butanone 4-phosphate. This is the penultimate step in the biosynthesis of riboflavin. In Campylobacter concisus (strain 13826), this protein is 6,7-dimethyl-8-ribityllumazine synthase.